The following is a 47-amino-acid chain: MAKGKRTFQPNNRRRARVHGFRLRMRTRAGRSIVSDRRRKGRRTLTA.

This sequence belongs to the bacterial ribosomal protein bL34 family.

The chain is Large ribosomal subunit protein bL34 (rpmH) from Mycobacterium leprae (strain TN).